Reading from the N-terminus, the 532-residue chain is Cytochrome P450 12b1, mitochondrial (532 aa).

Position 480 (cysteine 480) interacts with heme.

It belongs to the cytochrome P450 family. The cofactor is heme.

Its subcellular location is the mitochondrion. Its function is as follows. Probably involved in steroid hormones biosynthesis. The polypeptide is Cytochrome P450 12b1, mitochondrial (Cyp12b1) (Drosophila acanthoptera (Fruit fly)).